Here is a 679-residue protein sequence, read N- to C-terminus: UvrABC system protein B (679 aa).

One can recognise a Helicase ATP-binding domain in the interval 25–176 (KGVNTGKEFQ…NLRSYLRSLV (152 aa)). 38 to 45 (GATGTGKT) is a binding site for ATP. Positions 91-114 (YYDYYQPEAYVPVSDTYIAKTASI) match the Beta-hairpin motif. Residues 429-583 (QIEDLLSEIR…KKYNQVNGIT (155 aa)) enclose the Helicase C-terminal domain. The UVR domain occupies 639–674 (PDLIEKLEIKMKDAAKELNFEEAANLRDRIKKLRQK).

It belongs to the UvrB family. In terms of assembly, forms a heterotetramer with UvrA during the search for lesions. Interacts with UvrC in an incision complex.

It localises to the cytoplasm. In terms of biological role, the UvrABC repair system catalyzes the recognition and processing of DNA lesions. A damage recognition complex composed of 2 UvrA and 2 UvrB subunits scans DNA for abnormalities. Upon binding of the UvrA(2)B(2) complex to a putative damaged site, the DNA wraps around one UvrB monomer. DNA wrap is dependent on ATP binding by UvrB and probably causes local melting of the DNA helix, facilitating insertion of UvrB beta-hairpin between the DNA strands. Then UvrB probes one DNA strand for the presence of a lesion. If a lesion is found the UvrA subunits dissociate and the UvrB-DNA preincision complex is formed. This complex is subsequently bound by UvrC and the second UvrB is released. If no lesion is found, the DNA wraps around the other UvrB subunit that will check the other stand for damage. In Prochlorococcus marinus (strain MIT 9301), this protein is UvrABC system protein B.